A 335-amino-acid polypeptide reads, in one-letter code: DDRGK domain-containing protein 1 (335 aa).

Residues 1 to 6 lie on the Lumenal side of the membrane; sequence MGDTYS. A helical transmembrane segment spans residues 7–27; that stretch reads LVLVAGYLSIFLFIGAIGYFY. Topologically, residues 28 to 335 are cytoplasmic; the sequence is LSKPRIPSSN…NNDQDPVDTN (308 aa). The disordered stretch occupies residues 37 to 124; it reads NVNEQQQQQQ…GEDIGVVAPG (88 aa). Low complexity-rich tracts occupy residues 41–56 and 91–103; these read QQQQ…QQPQ and SSGS…TNSD. Residues 104-117 show a composition bias toward acidic residues; sequence NYDDDNGQEGEGED.

It belongs to the DDRGK1 family.

It is found in the endoplasmic reticulum membrane. Substrate adapter for ufmylation, the covalent attachment of the ubiquitin-like modifier UFM1 to substrate proteins. In Dictyostelium discoideum (Social amoeba), this protein is DDRGK domain-containing protein 1.